A 774-amino-acid chain; its full sequence is MARLNEQAMSSVALSTDNLELLRRKFLRQNRDIARVNSTQSLRIRGLENECARLLSENLELRGQVLRLEKELQDNAARRVADHALEVKAKMETQLAELSSLLASLGEPPSKRRLSEERRYAQPRPSVHRSPPLRRARQEADQELLAEQEGRLPPIYENKTYARATMNSEEILALCMQADDSNDSPDIGPPPVSRFVEDDMVIPCSPSPNKNAEAEETETTEQVEESPRALQVPPSLSPPKLDYDRRPNMILFSPPKESRVAEPSKMFSPPPMEPPKQSTSAVPSETIRAGLKRKLNGDNQNEPNKATKLQQGKENGNETGIKKGLSARDPHKRKSIKETATKPRAPLSAKSTNEHIVSPKKPAKPHQVADDFKPVKVHKASKGKEKVDLPAPDKKSAVEETQGNSTSAFTKVEILPPALEPTPEVAEIPETDILITPGTPERASESTVVTHDTPPPAHISSNGETSRPSRRARAAISYTEPNLRDKMRRPTKELFDAVSGEGKFLHRPTSQQQQQQRKGDESAPTSVSKVKVEPSPAVDISSLTSSALFEKEKEKEPQPDEGILSPNGILPSSVDLGRRRRASSFSTAAPAMTIPSVQEQSTLNLPAADETDENAAVEAQIQKELSNSITTRPRGGKGRQSMSRSVPTIPTENYEHEDAQLSTNSASVDLYDFASCASPDSAAPQLEATTGDVPVNKKAPKGSRRASSAASTETTATASAKPRSSRKRASMLVPKKSLWAEELAQEEEDEEDVGNDSGGSLSKGRASRRRSMML.

A coiled-coil region spans residues 41–105; the sequence is SLRIRGLENE…AELSSLLASL (65 aa). Disordered stretches follow at residues 106-151, 205-661, and 676-774; these read GEPP…QEGR, SPSP…DAQL, and CASP…SMML. The segment covering 109–120 has biased composition (basic and acidic residues); it reads PSKRRLSEERRY. A compositionally biased stretch (acidic residues) spans 214-224; that stretch reads AEETETTEQVE. The span at 297 to 318 shows a compositional bias: polar residues; the sequence is GDNQNEPNKATKLQQGKENGNE. A compositionally biased stretch (basic and acidic residues) spans 382-398; sequence KGKEKVDLPAPDKKSAV. Over residues 399–409 the composition is skewed to polar residues; that stretch reads EETQGNSTSAF. Composition is skewed to basic and acidic residues over residues 482-495 and 549-558; these read NLRD…KELF and FEKEKEKEPQ. Composition is skewed to polar residues over residues 595 to 604 and 640 to 651; these read PSVQEQSTLN and QSMSRSVPTIPT. The span at 706–722 shows a compositional bias: low complexity; it reads ASSAASTETTATASAKP. Over residues 743 to 754 the composition is skewed to acidic residues; sequence LAQEEEDEEDVG. Positions 765 to 774 are enriched in basic residues; it reads RASRRRSMML.

The protein belongs to the shugoshin family.

Its subcellular location is the nucleus. The protein resides in the chromosome. The protein localises to the centromere. Functionally, plays a central role in chromosome cohesion during cell division by preventing premature dissociation of cohesin complex from centromeres after prophase, when most of cohesin complex dissociates from chromosomes arms. The chain is Shugoshin (sgo-1) from Neurospora crassa (strain ATCC 24698 / 74-OR23-1A / CBS 708.71 / DSM 1257 / FGSC 987).